The following is a 75-amino-acid chain: MYB-like transcription factor ETC3 (75 aa).

Positions 1–20 are disordered; that stretch reads MDNHRRTKQPKTNSIVTSSS. The Myb-like domain occupies 34–71; the sequence is SQEEEDLVSRMHKLVGDRWELIAGRIPGRTAGEIERFW.

Expressed in leaf epidermal cells, stomate guard cells in leaves, cotyledons and hypocotyls, inflorescences, developing seeds and siliques.

It localises to the nucleus. In terms of biological role, MYB-type transcription factor involved in epidermal cell fate specification. Acts as a negative regulator of trichome development, including endoreplication, by mediating lateral inhibition. Promotes the formation of hair developing cells in H position in root epidermis, probably by inhibiting non-hair cell formation. May have pleiotropic effects on flowering development and epidermal cell size through the regulation of endoreduplication. The chain is MYB-like transcription factor ETC3 (ETC3) from Arabidopsis thaliana (Mouse-ear cress).